The following is a 270-amino-acid chain: Large ribosomal subunit protein uL30 (270 aa).

Met1 is subject to N-acetylmethionine. 6 consecutive repeat copies span residues 7–18, 19–29, 30–40, 41–52, 53–64, and 65–76. The tract at residues 7 to 76 is 6 X 12 AA tandem repeats; that stretch reads KKKKVATVPG…ARRKLIYEKA (70 aa). Thr39 is subject to Phosphothreonine. N6-acetyllysine is present on Lys146. N6-succinyllysine is present on Lys149. Residue Tyr161 is modified to Phosphotyrosine.

It belongs to the universal ribosomal protein uL30 family. Component of the large ribosomal subunit. Homodimer. Interacts with DHX33.

It localises to the cytoplasm. Functionally, component of the large ribosomal subunit. The ribosome is a large ribonucleoprotein complex responsible for the synthesis of proteins in the cell. Binds to G-rich structures in 28S rRNA and in mRNAs. Plays a regulatory role in the translation apparatus; inhibits cell-free translation of mRNAs. This chain is Large ribosomal subunit protein uL30 (Rpl7), found in Mus musculus (Mouse).